Here is a 198-residue protein sequence, read N- to C-terminus: Recombination protein RecR (198 aa).

The C4-type zinc finger occupies 57–72 (CSICGRLTDDDPCSIC). One can recognise a Toprim domain in the interval 80–175 (TTILVLEDSR…KVTRLARGLA (96 aa)).

Belongs to the RecR family.

Its function is as follows. May play a role in DNA repair. It seems to be involved in an RecBC-independent recombinational process of DNA repair. It may act with RecF and RecO. This chain is Recombination protein RecR, found in Streptococcus pneumoniae serotype 2 (strain D39 / NCTC 7466).